Consider the following 180-residue polypeptide: ATP-dependent protease subunit HslV (180 aa).

Thr-6 is an active-site residue. Na(+) contacts are provided by Ala-164, Cys-167, and Thr-170.

Belongs to the peptidase T1B family. HslV subfamily. In terms of assembly, a double ring-shaped homohexamer of HslV is capped on each side by a ring-shaped HslU homohexamer. The assembly of the HslU/HslV complex is dependent on binding of ATP.

It localises to the cytoplasm. It carries out the reaction ATP-dependent cleavage of peptide bonds with broad specificity.. Its activity is regulated as follows. Allosterically activated by HslU binding. Its function is as follows. Protease subunit of a proteasome-like degradation complex believed to be a general protein degrading machinery. The polypeptide is ATP-dependent protease subunit HslV (Borrelia hermsii (strain HS1 / DAH)).